The chain runs to 492 residues: GTPase Obg (492 aa).

The 158-residue stretch at 2–159 folds into the Obg domain; it reads PRFVDRVVIH…RELTLELKTV (158 aa). Positions 160–340 constitute an OBG-type G domain; that stretch reads ADVGLIGFPS…LIFGLWQMIS (181 aa). GTP is bound by residues 166–173, 191–195, 212–215, 292–295, and 321–323; these read GFPSAGKS, FTTLV, DVPG, NKID, and STV. Mg(2+) is bound by residues Ser173 and Thr193. Residues 358–438 form the OCT domain; the sequence is PVPVDDSGFR…IGDMTFDWEP (81 aa). Residues 449-492 form a disordered region; the sequence is SGRGTDARLERTERVGAAERKAARRQRRTGDDAERGTTERGENT. Composition is skewed to basic and acidic residues over residues 453 to 469 and 476 to 492; these read TDARLERTERVGAAERK and RTGDDAERGTTERGENT.

Belongs to the TRAFAC class OBG-HflX-like GTPase superfamily. OBG GTPase family. As to quaternary structure, monomer. Requires Mg(2+) as cofactor.

It localises to the cytoplasm. Functionally, an essential GTPase which binds GTP, GDP and possibly (p)ppGpp with moderate affinity, with high nucleotide exchange rates and a fairly low GTP hydrolysis rate. Plays a role in control of the cell cycle, stress response, ribosome biogenesis and in those bacteria that undergo differentiation, in morphogenesis control. The polypeptide is GTPase Obg (Mycobacterium avium (strain 104)).